The chain runs to 100 residues: Small ribosomal subunit protein uS14c (100 aa).

The protein belongs to the universal ribosomal protein uS14 family. Part of the 30S ribosomal subunit.

It localises to the plastid. Its subcellular location is the chloroplast. Its function is as follows. Binds 16S rRNA, required for the assembly of 30S particles. The chain is Small ribosomal subunit protein uS14c from Tetradesmus obliquus (Green alga).